We begin with the raw amino-acid sequence, 512 residues long: MEQPAGLQVDYMFRGVEHAVRVVVSGQVLELEVEDRMTADQWRGEFDANFIEDLTHKTGNFKQFSIFCNMLESALTQSSESVTLDLLTYTDLESLRSRKLGGRPGPCPRSAQLNSKRYLILIYSVEFDRIHYPLPLPYQGKPDPVVLQGIIRSLKEELGHLRGMNGGQDARETEIWHLREQVTRLASEKRELEAQLGRSREEALAGRAARQEAESLRGLVRGLELELRQERGLGGRAAGRRSQDCRRLAKELEEVKASERNLRARLKTLNCELAMYRRGRRTLPAGAREDRALSSRERSTSRGRTATRSSSRESNRGARSHGRPAHPSPSPTGSRVPRFDPTAFVKAKEKKQREIRMKRQQQQQQQRNRMGSGGSGDGPSVSWSHQTRPPAAVTGRGDAANRSRNRSSSVDSFRSRCSSVSSCSELEDFSQSVSKSRRCRGRGKPPSPIPWSGSKTKSTTRERNNHQRHLASSGAWVPIKEYSSDYQGADMAEIDARLKALQEYMNRLDTRS.

Met-1 is modified (N-acetylmethionine). The tract at residues 1–142 (MEQPAGLQVD…PLPLPYQGKP (142 aa)) is head domain. Coiled coils occupy residues 176–203 (WHLR…REEA) and 246–273 (RRLA…NCEL). Thr-282 carries the phosphothreonine modification. Disordered stretches follow at residues 282–415 (TLPA…SFRS) and 430–472 (SQSV…HLAS). Basic and acidic residues predominate over residues 287 to 300 (AREDRALSSRERST). 4 positions are modified to phosphoserine: Ser-328, Ser-330, Ser-372, and Ser-375. Over residues 406-415 (RSSSVDSFRS) the composition is skewed to low complexity. Ser-447 and Ser-473 each carry phosphoserine.

It belongs to the CCDC61 family. Forms homodimers (via head domain). Interacts with CEP170. Interacts with PCM1 and CEP131. Binds tubulin.

It is found in the cytoplasm. The protein localises to the cytoskeleton. It localises to the microtubule organizing center. The protein resides in the centrosome. Its subcellular location is the centriolar satellite. It is found in the cilium basal body. In terms of biological role, microtubule-binding centrosomal protein required for centriole cohesion, independently of the centrosome-associated protein/CEP250 and rootletin/CROCC linker. In interphase, required for anchoring microtubule at the mother centriole subdistal appendages and for centrosome positioning. During mitosis, may be involved in spindle assembly and chromatin alignment by regulating the organization of spindle microtubules into a symmetrical structure. Plays a non-essential role in ciliogenesis. This chain is Centrosomal protein CCDC61, found in Rattus norvegicus (Rat).